Here is a 662-residue protein sequence, read N- to C-terminus: UPF0313 protein CPR_1216 (662 aa).

The 272-residue stretch at A296 to K567 folds into the Radical SAM core domain. Residues C310, C314, and C317 each contribute to the [4Fe-4S] cluster site. The interval R597–R662 is disordered. Residues S618–K632 show a composition bias toward basic and acidic residues. The segment covering R633–K644 has biased composition (basic residues).

Belongs to the UPF0313 family. [4Fe-4S] cluster is required as a cofactor.

This chain is UPF0313 protein CPR_1216, found in Clostridium perfringens (strain SM101 / Type A).